Reading from the N-terminus, the 219-residue chain is Elongation factor Ts, chloroplastic (219 aa).

Belongs to the EF-Ts family.

The protein localises to the plastid. It is found in the chloroplast. Functionally, associates with the EF-Tu.GDP complex and induces the exchange of GDP to GTP. It remains bound to the aminoacyl-tRNA.EF-Tu.GTP complex up to the GTP hydrolysis stage on the ribosome. This is Elongation factor Ts, chloroplastic (tsf) from Rhodomonas salina (Cryptomonas salina).